The chain runs to 258 residues: Imidazole glycerol phosphate synthase subunit HisF (258 aa).

Active-site residues include Asp-11 and Asp-130.

Belongs to the HisA/HisF family. In terms of assembly, heterodimer of HisH and HisF.

Its subcellular location is the cytoplasm. The enzyme catalyses 5-[(5-phospho-1-deoxy-D-ribulos-1-ylimino)methylamino]-1-(5-phospho-beta-D-ribosyl)imidazole-4-carboxamide + L-glutamine = D-erythro-1-(imidazol-4-yl)glycerol 3-phosphate + 5-amino-1-(5-phospho-beta-D-ribosyl)imidazole-4-carboxamide + L-glutamate + H(+). It participates in amino-acid biosynthesis; L-histidine biosynthesis; L-histidine from 5-phospho-alpha-D-ribose 1-diphosphate: step 5/9. IGPS catalyzes the conversion of PRFAR and glutamine to IGP, AICAR and glutamate. The HisF subunit catalyzes the cyclization activity that produces IGP and AICAR from PRFAR using the ammonia provided by the HisH subunit. This is Imidazole glycerol phosphate synthase subunit HisF from Xanthomonas oryzae pv. oryzae (strain MAFF 311018).